The chain runs to 220 residues: Iron-sulfur cluster repair protein YtfE (220 aa).

Belongs to the RIC family. YtfE subfamily. Homodimer.

Its subcellular location is the cytoplasm. Its function is as follows. Di-iron-containing protein involved in the repair of iron-sulfur clusters damaged by oxidative and nitrosative stress conditions. The chain is Iron-sulfur cluster repair protein YtfE from Escherichia coli O6:K15:H31 (strain 536 / UPEC).